We begin with the raw amino-acid sequence, 1127 residues long: Caprin-2 (1127 aa).

A disordered region spans residues 67–108; that stretch reads YQSPSGHSEEEREGNMKSAKPQVNHSQHGESQRALSPLQSTL. Positions 99–108 are enriched in polar residues; sequence RALSPLQSTL. Coiled coils occupy residues 129–156 and 194–216; these read LKHK…GEHL and AQKK…KLRT. Disordered stretches follow at residues 382–614, 642–753, and 922–975; these read NKQG…KDPV, DKPS…SSSV, and QCYK…PVDV. 2 stretches are compositionally biased toward basic and acidic residues: residues 402-432 and 440-464; these read KRWD…HQEV and EQRK…EISK. Composition is skewed to polar residues over residues 512–531 and 544–567; these read PKSW…SWTT and TPKS…QISP. Basic and acidic residues predominate over residues 588-597; sequence LNTEPKDVPK. 2 stretches are compositionally biased toward polar residues: residues 665–714 and 741–753; these read KEQN…TSET and QGFQ…SSSV. Residues Ser-948 and Ser-949 each carry the phosphoserine modification. A compositionally biased stretch (polar residues) spans 956 to 970; that stretch reads TFNSGDSGQGDSRSM. The C1q domain occupies 993–1127; sequence PQQMRVAFSA…TFSGYLLYQD (135 aa). Ca(2+)-binding residues include Asp-1078 and Glu-1084.

It belongs to the caprin family. In terms of assembly, homotrimer; via C1q domain. Found in a complex with LRP6, CCNY and CDK14 during G2/M stage; CAPRIN2 functions as a scaffold for the complex by binding to CCNY via its N terminus and to CDK14 via its C terminus. Interacts with LRP5. Interacts with LRP6. As to expression, detected in all tissues tested with highest levels of expression in brain and spleen.

It localises to the cytoplasm. The protein localises to the mitochondrion. Its subcellular location is the cell membrane. Its function is as follows. Promotes phosphorylation of the Wnt coreceptor LRP6, leading to increased activity of the canonical Wnt signaling pathway. Facilitates constitutive LRP6 phosphorylation by CDK14/CCNY during G2/M stage of the cell cycle, which may potentiate cells for Wnt signaling. May regulate the transport and translation of mRNAs, modulating for instance the expression of proteins involved in synaptic plasticity in neurons. Involved in regulation of growth as erythroblasts shift from a highly proliferative state towards their terminal phase of differentiation. May be involved in apoptosis. This chain is Caprin-2, found in Homo sapiens (Human).